The primary structure comprises 325 residues: Reticulocalbin-1 (325 aa).

Positions 1–23 (MARGGRLGLALGLLLALVLALRA) are cleaved as a signal peptide. Residue Asn-47 is glycosylated (N-linked (GlcNAc...) asparagine; partial). Phosphoserine is present on residues Ser-49 and Ser-74. 6 EF-hand domains span residues 73–108 (ESKE…VQKR), 109–144 (YIYD…YYLG), 160–195 (KMLP…EEFE), 197–232 (MKEI…HEDN), 238–273 (WVLS…QDYD), and 274–309 (HAQA…FVGS). Ca(2+)-binding residues include Asp-86, Asp-88, Asp-90, Glu-97, Asp-122, Asp-124, Asp-126, Lys-128, Glu-133, Asp-173, Asp-175, Asp-177, Thr-179, Glu-184, Asp-210, Asn-212, Asp-214, Glu-221, Asp-251, Asn-253, Asp-255, Lys-257, Glu-262, Asp-287, Asn-289, Asp-291, Met-293, and Glu-298. A Prevents secretion from ER motif is present at residues 322-325 (HDEL).

This sequence belongs to the CREC family. In terms of processing, O-glycosylated. O-mannosylated by POMT1 and POMT2 and elongated by POMGNT1.

The protein localises to the endoplasmic reticulum lumen. Functionally, may regulate calcium-dependent activities in the endoplasmic reticulum lumen or post-ER compartment. This is Reticulocalbin-1 (Rcn1) from Mus musculus (Mouse).